The primary structure comprises 246 residues: Orotidine 5'-phosphate decarboxylase (246 aa).

Residues Asp22, Lys44, 71-80, Thr130, Arg191, Gln201, Gly221, and Arg222 contribute to the substrate site; that span reads DLKYHDIPHT. Catalysis depends on Lys73, which acts as the Proton donor.

Belongs to the OMP decarboxylase family. Type 1 subfamily. Homodimer.

It catalyses the reaction orotidine 5'-phosphate + H(+) = UMP + CO2. Its pathway is pyrimidine metabolism; UMP biosynthesis via de novo pathway; UMP from orotate: step 2/2. Functionally, catalyzes the decarboxylation of orotidine 5'-monophosphate (OMP) to uridine 5'-monophosphate (UMP). This chain is Orotidine 5'-phosphate decarboxylase, found in Neisseria meningitidis serogroup A / serotype 4A (strain DSM 15465 / Z2491).